A 317-amino-acid polypeptide reads, in one-letter code: Hydroxyacyl-CoA dehydrogenase ChsB1 (317 aa).

L32, D51, D82, I83, N108, S168, Y181, K185, and T215 together coordinate NAD(+). Residues S168, Y181, and K185 contribute to the active site.

Belongs to the short-chain dehydrogenases/reductases (SDR) family. In terms of assembly, homodimer, with 1 active site on each face.

It carries out the reaction (22S)-hydroxy-3-oxo-chol-4-ene-24-oyl-CoA + NAD(+) = 3,22-dioxochol-4-en-24-oyl-CoA + NADH + H(+). The protein operates within steroid metabolism; cholesterol degradation. Functionally, a reversible dehydrogenase involved in cholesterol side-chain degradation. Catalyzes the oxidation of hydroxyl-cholesterol-CoA ester metabolic intermediate (22S)-HOCO-CoA (3-oxo-chol-4-ene-(22S)-hydroxy-24-oyl-CoA), the product of ChsH3, has no activity on (22R)-HOCO-CoA (the product of EchA19). Also acts on (3R)-hydroxyoctanoyl-CoA and 17-beta-hydroxyandrost-4-en-3-one, but not on 7-alpha-hydroxyandrost-4-en-3-one, uses NAD(+) but not NADP(+). In Mycobacterium tuberculosis (strain ATCC 25618 / H37Rv), this protein is Hydroxyacyl-CoA dehydrogenase ChsB1.